Reading from the N-terminus, the 154-residue chain is Putative peroxiredoxin MT1643 (154 aa).

The Thioredoxin domain occupies 1-153 (MKTGDTVADF…ALATLRAIRS (153 aa)). Cysteine 44 (cysteine sulfenic acid (-SOH) intermediate) is an active-site residue. Cysteine 44 and cysteine 49 are joined by a disulfide.

This sequence belongs to the peroxiredoxin family. BCP/PrxQ subfamily. In terms of assembly, monomer.

It catalyses the reaction a hydroperoxide + [thioredoxin]-dithiol = an alcohol + [thioredoxin]-disulfide + H2O. Thiol-specific peroxidase that catalyzes the reduction of hydrogen peroxide and organic hydroperoxides to water and alcohols, respectively. Plays a role in cell protection against oxidative stress by detoxifying peroxides and as sensor of hydrogen peroxide-mediated signaling events. The protein is Putative peroxiredoxin MT1643 (bcpB) of Mycobacterium tuberculosis (strain CDC 1551 / Oshkosh).